Here is a 409-residue protein sequence, read N- to C-terminus: Protein a6 (409 aa).

At serine 86 the chain carries Phosphoserine. Residues 106-120 (RAHRTGRRQAPRRAA) show a composition bias toward basic residues. The tract at residues 106-165 (RAHRTGRRQAPRRAATHSYPVTDSILITSDDEHNEQEPSSTARVRSQLSMRSPPPLAPLT) is disordered. Residue threonine 133 is modified to Phosphothreonine. Phosphoserine is present on serine 134. The segment covering 142 to 155 (EPSSTARVRSQLSM) has biased composition (polar residues).

This Drosophila melanogaster (Fruit fly) protein is Protein a6 (a6).